A 293-amino-acid polypeptide reads, in one-letter code: Nucleotide-binding protein CKR_3143 (293 aa).

8-15 (GLSGAGKT) is a binding site for ATP. 59–62 (DIRG) provides a ligand contact to GTP.

This sequence belongs to the RapZ-like family.

Functionally, displays ATPase and GTPase activities. This is Nucleotide-binding protein CKR_3143 from Clostridium kluyveri (strain NBRC 12016).